The sequence spans 418 residues: Gamma-glutamyl phosphate reductase (418 aa).

The protein belongs to the gamma-glutamyl phosphate reductase family.

The protein localises to the cytoplasm. The enzyme catalyses L-glutamate 5-semialdehyde + phosphate + NADP(+) = L-glutamyl 5-phosphate + NADPH + H(+). It functions in the pathway amino-acid biosynthesis; L-proline biosynthesis; L-glutamate 5-semialdehyde from L-glutamate: step 2/2. Catalyzes the NADPH-dependent reduction of L-glutamate 5-phosphate into L-glutamate 5-semialdehyde and phosphate. The product spontaneously undergoes cyclization to form 1-pyrroline-5-carboxylate. The chain is Gamma-glutamyl phosphate reductase from Aliivibrio fischeri (strain MJ11) (Vibrio fischeri).